A 286-amino-acid polypeptide reads, in one-letter code: Aquaporin NIP1-3 (286 aa).

Positions 1-44 are disordered; sequence MAGGEHGVNGQHEETRAMEEGSRDHQARCENSEQDGGSKSSSNN. Residues 11-31 show a composition bias toward basic and acidic residues; that stretch reads QHEETRAMEEGSRDHQARCEN. Positions 34–44 are enriched in polar residues; the sequence is QDGGSKSSSNN. 2 helical membrane passes run 56 to 76 and 84 to 104; these read VIAE…AVAV and VTFP…VYSV. Residues 113–115 carry the NPA 1 motif; that stretch reads NPA. 3 helical membrane-spanning segments follow: residues 131 to 153, 172 to 192, and 200 to 220; these read VPAY…RALF, SLAM…GVAT, and LAGL…GPIS. An NPA 2 motif is present at residues 225 to 227; that stretch reads NPA. A helical transmembrane segment spans residues 239 to 259; the sequence is YTGIWVYIAGPVFGAVAGAWA.

The protein belongs to the MIP/aquaporin (TC 1.A.8) family. NIP (TC 1.A.8.12) subfamily.

The protein resides in the membrane. Its function is as follows. Aquaporins facilitate the transport of water and small neutral solutes across cell membranes. This chain is Aquaporin NIP1-3 (NIP1-3), found in Oryza sativa subsp. japonica (Rice).